Reading from the N-terminus, the 159-residue chain is Protein-export protein SecB (159 aa).

The protein belongs to the SecB family. Homotetramer, a dimer of dimers. One homotetramer interacts with 1 SecA dimer.

It is found in the cytoplasm. In terms of biological role, one of the proteins required for the normal export of preproteins out of the cell cytoplasm. It is a molecular chaperone that binds to a subset of precursor proteins, maintaining them in a translocation-competent state. It also specifically binds to its receptor SecA. This chain is Protein-export protein SecB, found in Hahella chejuensis (strain KCTC 2396).